Here is an 840-residue protein sequence, read N- to C-terminus: Leucine-zipper-like transcriptional regulator 1 (840 aa).

Ala2 carries the post-translational modification N-acetylalanine. Kelch repeat units follow at residues 79–128 (AIYV…VYGS), 130–185 (MFVF…VYSD), 187–238 (LWIF…VRRD), 239–285 (KMFV…QRRY), 295–341 (HLYV…PERA), and 399–450 (AMYI…FVLG). Positions 329–353 (DSEVGGAEVPERACASEEVPTLTSE) are disordered. BTB domains lie at 443–537 (CDVE…KYPR) and 667–736 (CDIT…NMPP).

This sequence belongs to the LZTR1 family. As to quaternary structure, homodimer. Component of the BCR(LZTR1) E3 ubiquitin ligase complex, at least composed of CUL3, LZTR1 and RBX1. Interacts with Ras (K-Ras/KRAS, N-Ras/NRAS and H-Ras/HRAS). Interacts with RAF1. Interacts with SHOC2. Interacts with PPP1CB. Phosphorylated on tyrosine upon induction of apoptosis, leading to its degradation by the proteasome.

It is found in the endomembrane system. Its subcellular location is the recycling endosome. The protein localises to the golgi apparatus. The protein operates within protein modification; protein ubiquitination. Its function is as follows. Substrate-specific adapter of a BCR (BTB-CUL3-RBX1) E3 ubiquitin-protein ligase complex that mediates ubiquitination of Ras (K-Ras/KRAS, N-Ras/NRAS and H-Ras/HRAS). Is a negative regulator of RAS-MAPK signaling that acts by controlling Ras levels and decreasing Ras association with membranes. This is Leucine-zipper-like transcriptional regulator 1 (LZTR1) from Pongo abelii (Sumatran orangutan).